Reading from the N-terminus, the 260-residue chain is Cytochrome c oxidase subunit 2 (260 aa).

Residues 1–41 are Mitochondrial intermembrane-facing; that stretch reads MIVLKWLFFTISPCDAAEPWQLGFQDAATPIMQGIIDLHHD. Residues 42–62 form a helical membrane-spanning segment; that stretch reads IFFFLILILVFVLWILVRALW. The Mitochondrial matrix segment spans residues 63-86; sequence HFHYKKNAIPQRIVHGTTIEILWT. The chain crosses the membrane as a helical span at residues 87-107; sequence IFPSIILMFIAIPSFALLYSM. The Mitochondrial intermembrane portion of the chain corresponds to 108-260; the sequence is DEVVVDPAIT…NQLIPQTGEA (153 aa). Residues histidine 187, cysteine 222, glutamate 224, cysteine 226, histidine 230, and methionine 233 each coordinate Cu cation. Glutamate 224 is a Mg(2+) binding site.

Belongs to the cytochrome c oxidase subunit 2 family. As to quaternary structure, component of the cytochrome c oxidase (complex IV, CIV), a multisubunit enzyme composed of a catalytic core of 3 subunits and several supernumerary subunits. The complex exists as a monomer or a dimer and forms supercomplexes (SCs) in the inner mitochondrial membrane with ubiquinol-cytochrome c oxidoreductase (cytochrome b-c1 complex, complex III, CIII). Requires Cu cation as cofactor.

The protein resides in the mitochondrion inner membrane. It carries out the reaction 4 Fe(II)-[cytochrome c] + O2 + 8 H(+)(in) = 4 Fe(III)-[cytochrome c] + 2 H2O + 4 H(+)(out). Its function is as follows. Component of the cytochrome c oxidase, the last enzyme in the mitochondrial electron transport chain which drives oxidative phosphorylation. The respiratory chain contains 3 multisubunit complexes succinate dehydrogenase (complex II, CII), ubiquinol-cytochrome c oxidoreductase (cytochrome b-c1 complex, complex III, CIII) and cytochrome c oxidase (complex IV, CIV), that cooperate to transfer electrons derived from NADH and succinate to molecular oxygen, creating an electrochemical gradient over the inner membrane that drives transmembrane transport and the ATP synthase. Cytochrome c oxidase is the component of the respiratory chain that catalyzes the reduction of oxygen to water. Electrons originating from reduced cytochrome c in the intermembrane space (IMS) are transferred via the dinuclear copper A center (CU(A)) of subunit 2 and heme A of subunit 1 to the active site in subunit 1, a binuclear center (BNC) formed by heme A3 and copper B (CU(B)). The BNC reduces molecular oxygen to 2 water molecules using 4 electrons from cytochrome c in the IMS and 4 protons from the mitochondrial matrix. The protein is Cytochrome c oxidase subunit 2 (COX2) of Arabidopsis thaliana (Mouse-ear cress).